The sequence spans 511 residues: ATP synthase subunit beta, mitochondrial (511 aa).

Residues 1–33 (MVLPRLYTATSRAAFKAAKQSAPLLSTSWKRCM) constitute a mitochondrion transit peptide. T112 is modified (phosphothreonine). 190–197 (GGAGVGKT) lines the ATP pocket. Residue T237 is modified to Phosphothreonine. S373 is modified (phosphoserine).

Belongs to the ATPase alpha/beta chains family. As to quaternary structure, F-type ATPases have 2 components, CF(1) - the catalytic core - and CF(0) - the membrane proton channel. CF(1) has five subunits: alpha(3), beta(3), gamma(1), delta(1), epsilon(1). CF(0) has three main subunits: a, b and c.

The protein localises to the mitochondrion. It is found in the mitochondrion inner membrane. It carries out the reaction ATP + H2O + 4 H(+)(in) = ADP + phosphate + 5 H(+)(out). Mitochondrial membrane ATP synthase (F(1)F(0) ATP synthase or Complex V) produces ATP from ADP in the presence of a proton gradient across the membrane which is generated by electron transport complexes of the respiratory chain. F-type ATPases consist of two structural domains, F(1) - containing the extramembraneous catalytic core, and F(0) - containing the membrane proton channel, linked together by a central stalk and a peripheral stalk. During catalysis, ATP synthesis in the catalytic domain of F(1) is coupled via a rotary mechanism of the central stalk subunits to proton translocation. Subunits alpha and beta form the catalytic core in F(1). Rotation of the central stalk against the surrounding alpha(3)beta(3) subunits leads to hydrolysis of ATP in three separate catalytic sites on the beta subunits. The polypeptide is ATP synthase subunit beta, mitochondrial (ATP2) (Saccharomyces cerevisiae (strain ATCC 204508 / S288c) (Baker's yeast)).